The sequence spans 466 residues: Neuropeptide Y receptor type 5 (466 aa).

Topologically, residues 1–63 are extracellular; it reads MEVKLEEHFN…YRGSVDDLQY (63 aa). Residues asparagine 10, asparagine 17, asparagine 38, and asparagine 39 are each glycosylated (N-linked (GlcNAc...) asparagine). The chain crosses the membrane as a helical span at residues 64-84; sequence FLIGLYTFVSLLGFMGNLLIL. The Cytoplasmic portion of the chain corresponds to 85–98; that stretch reads MAVMKKRNQKTTVN. Residues 99–119 traverse the membrane as a helical segment; that stretch reads FLIGNLAFSDILVVLFCSPFT. Over 120–138 the chain is Extracellular; sequence LTSVLLDQWMFGKAMCHIM. Cysteine 135 and cysteine 219 are joined by a disulfide. The helical transmembrane segment at 139–159 threads the bilayer; the sequence is PFLQCVSVLVSTLILISIAIV. Residues 160-177 are Cytoplasmic-facing; the sequence is RYHMIKHPISNNLTANHG. A helical membrane pass occupies residues 178–198; it reads YFLIATVWTLGFAICSPLPVF. The Extracellular portion of the chain corresponds to 199 to 229; it reads HSLVELKETFGSALLSSKYLCVESWPSDSYR. A helical membrane pass occupies residues 230–250; sequence IAFTISLLLVQYILPLVCLTV. Over 251–389 the chain is Cytoplasmic; the sequence is SHTSVCRSIS…KKRSRSVFYR (139 aa). Residues 323-346 are disordered; it reads GPSQEKHLTVPENPGSVRSQLSPS. The chain crosses the membrane as a helical span at residues 390-410; that stretch reads LTILILVFAVSWMPLHVFHVV. Residues 411-427 are Extracellular-facing; it reads TDFNDNLISNRHFKLVY. A helical membrane pass occupies residues 428 to 448; the sequence is CICHLLGMMSCCLNPILYGFL. Topologically, residues 449-466 are cytoplasmic; it reads NNGIKADLRALIHCLHMS. Cysteine 462 carries the S-palmitoyl cysteine lipid modification.

This sequence belongs to the G-protein coupled receptor 1 family.

It is found in the cell membrane. Its function is as follows. Receptor for neuropeptide Y and peptide YY. The activity of this receptor is mediated by G proteins that inhibit adenylate cyclase activity. Seems to be associated with food intake. Could be involved in feeding disorders. This chain is Neuropeptide Y receptor type 5 (Npy5r), found in Mus musculus (Mouse).